The sequence spans 628 residues: Nucleoside-triphosphatase 2 (628 aa).

Residues 1–25 form the signal peptide; that stretch reads MWLPVYVPLLLVFGVSLSLPHGSLG. Glu236 acts as the Proton acceptor in catalysis. N-linked (GlcNAc...) asparagine glycosylation occurs at Asn432.

It belongs to the GDA1/CD39 NTPase family. Homotetramer.

The protein localises to the secreted. It localises to the parasitophorous vacuole. The enzyme catalyses a ribonucleoside 5'-triphosphate + H2O = a ribonucleoside 5'-diphosphate + phosphate + H(+). Functionally, may perform an important processing step in the conversion of high energy nucleotides prior to uptake by the parasite. NTPAse-II has a specific activity 4.5-fold lower than NTPAse-I in hydrolysis of ATP. The primary difference between these isozymes lies in their ability to hydrolyze nucleoside triphosphate versus diphosphate substrates. While NTPAse-II hydrolyzes ATP to ADP and ADP to AMP at almost the same rate, NTPAse-I hydrolyzes ADP to AMP at a much slower rate (0.7% of the rate for ATP). In Toxoplasma gondii, this protein is Nucleoside-triphosphatase 2 (NTP1).